Consider the following 224-residue polypeptide: ATP-dependent dethiobiotin synthetase BioD (224 aa).

Thr18 provides a ligand contact to Mg(2+). Lys39 is a catalytic residue. Ser43 lines the substrate pocket. Residues Asp56 and Glu117 each coordinate Mg(2+). ATP contacts are provided by residues Asp56, 117-120 (EGVG), and 177-178 (NE).

Belongs to the dethiobiotin synthetase family. In terms of assembly, homodimer. Mg(2+) is required as a cofactor.

Its subcellular location is the cytoplasm. It carries out the reaction (7R,8S)-7,8-diammoniononanoate + CO2 + ATP = (4R,5S)-dethiobiotin + ADP + phosphate + 3 H(+). It participates in cofactor biosynthesis; biotin biosynthesis; biotin from 7,8-diaminononanoate: step 1/2. Functionally, catalyzes a mechanistically unusual reaction, the ATP-dependent insertion of CO2 between the N7 and N8 nitrogen atoms of 7,8-diaminopelargonic acid (DAPA, also called 7,8-diammoniononanoate) to form a ureido ring. This chain is ATP-dependent dethiobiotin synthetase BioD, found in Xanthomonas euvesicatoria pv. vesicatoria (strain 85-10) (Xanthomonas campestris pv. vesicatoria).